We begin with the raw amino-acid sequence, 428 residues long: Ribulose bisphosphate carboxylase (428 aa).

Residue lysine 151 is the Proton acceptor of the active site. Lysine 153 lines the substrate pocket. Residues lysine 177, aspartate 179, and glutamate 180 each contribute to the Mg(2+) site. Lysine 177 carries the post-translational modification N6-carboxylysine. Histidine 270 (proton acceptor) is an active-site residue. Residues arginine 271, histidine 303, 354-356, and 376-379 contribute to the substrate site; these read SGG and QFGG.

It belongs to the RuBisCO large chain family. Type III subfamily. Homodimer or homodecamer. In contrast to form I RuBisCO, the form III RuBisCO is composed solely of large subunits. Requires Mg(2+) as cofactor.

It catalyses the reaction 2 (2R)-3-phosphoglycerate + 2 H(+) = D-ribulose 1,5-bisphosphate + CO2 + H2O. It carries out the reaction D-ribulose 1,5-bisphosphate + O2 = 2-phosphoglycolate + (2R)-3-phosphoglycerate + 2 H(+). Functionally, catalyzes the addition of molecular CO(2) and H(2)O to ribulose 1,5-bisphosphate (RuBP), generating two molecules of 3-phosphoglycerate (3-PGA). Functions in an archaeal AMP degradation pathway, together with AMP phosphorylase and R15P isomerase. The sequence is that of Ribulose bisphosphate carboxylase from Methanosarcina barkeri (strain Fusaro / DSM 804).